Consider the following 438-residue polypeptide: MMADEELGDEVKVFRRDEDADDDPMISGETSEQQLADDKKEAVMEAELDGAGRNPSIDVLKSAFPKVEPMSPSFPGLMSHFSPGYSAAALPMFMPLFMNPYAAALRSPSLMFPMGAMSPTFPMFPPSPVYGAAIAAAAAKQHFENMAPLNMRAGHPMNQMGMPPYMHPSSMAPQNVDRRAQGGGKAKKDDHVKKPLNAFMWFMKENRKALLEEIGNNEKQSAELNKELGKRWHDLSKEEQAKYFEMAKKDKETHKERYPEWSARENYAVNKKKTKKRRDKSIPSENNDQKKCRARFGVNNTEMWCKFCKRKKKCEYATDRSGGSDITDSQDGRGTSGAYSSSSESPSPKANAGIALTTQQQQAAMMHTMLMQMRLGSTTGASTHVPSPLASSSAGRSPLDANASDSESDVEEEEDEQIDPTVMQQTHDMLMQESMCTI.

Residues 1–39 form a disordered region; it reads MMADEELGDEVKVFRRDEDADDDPMISGETSEQQLADDK. Residues 1 to 45 form a sufficient for interaction with beta-catenin/sys-1 region; that stretch reads MMADEELGDEVKVFRRDEDADDDPMISGETSEQQLADDKKEAVME. Positions 9-18 are enriched in basic and acidic residues; sequence DEVKVFRRDE. The tract at residues 88–130 is involved in nuclear asymmetry; that stretch reads AALPMFMPLFMNPYAAALRSPSLMFPMGAMSPTFPMFPPSPVY. Phosphoserine; by LIT1 is present on residues Ser118 and Ser127. The segment at residues 192–262 is a DNA-binding region (HMG box); that stretch reads VKKPLNAFMW…THKERYPEWS (71 aa). Positions 250-263 are enriched in basic and acidic residues; the sequence is DKETHKERYPEWSA. 3 disordered regions span residues 250-288, 318-351, and 378-438; these read DKET…ENND, TDRS…PKAN, and TTGA…MCTI. A compositionally biased stretch (basic residues) spans 270 to 279; the sequence is NKKKTKKRRD. 2 stretches are compositionally biased toward polar residues: residues 324–339 and 378–395; these read SDIT…SGAY and TTGA…SSAG. Acidic residues predominate over residues 406 to 418; it reads SESDVEEEEDEQI.

This sequence belongs to the TCF/LEF family. Interacts (via N-terminal region) with beta-catenin homolog sys-1. Interacts with hda-1. Interacts with bar-1. Interacts with par-5; the interaction is direct and is enhanced by lit-1-mediated pop-1 phosphorylation. The interaction also leads to the subsequent nuclear export of pop-1. Interacts (when phosphorylated on Ser-118 and Ser-127) with lit-1; the interaction is dependent on the beta-catenin-lit-1 complex. Interacts with wrm-1. Interacts with homeobox protein egl-5. Interacts with zinc finger transcription factor ref-2; the interaction is direct and facilitates transcriptional activation; transcription may be repressed by beta-catenin/sys-1. In terms of processing, phosphorylated on Ser-118 and Ser-127 by lit-1 in the beta-catenin-lit-1 complex. Phosphorylation promotes the interaction of pop-1 and par-5 and the subsequent translocation of pop-1 from the nucleus to the cytoplasm.

The protein resides in the nucleus. The protein localises to the cytoplasm. In terms of biological role, transcription factor. Part of the Wnt signaling asymmetry pathway. Binds to the consensus sequence, 5'-(C/T)TTTG(A/T)(A/T)(G/C)-3'. Activates or represses target gene expression, depending on upstream Wnt signals and interactions with transcription co-regulators, such as beta-catenin/sys-1 or zinc finger transcription factor ref-2. Essential for the specification of the mesodermal and endodermal cell fates in early embryos. Required in many asymmetrical cell divisions in the early embryo and during larval development. Reciprocal distribution patterns of sys-1 and pop-1 in the daughters of anterior-posterior cell divisions functions in specifying cell fate; a higher sys-1 to pop-1 ratio promotes the posterior cell fate, whereas a low sys-1 to pop-1 ratio promotes the anterior fate. Involved in modulating nuclear localization or nuclear retention of sys-1. Involved in the terminal asymmetrical division of many embryonic neuroblasts; for example in the SMDD/AIY neuron lineage. In complex with ref-2, positively modulates expression of LIM/homeobox protein ttx-3 in anterior daughter cells of the SMDD/AIY lineage. Required for asymmetrical division of somatic gonadal precursor descendants which initiate axis formation required to control organ shape. Similarly, involved in asymmetrical division of seam cells, a stem cell-like lineage. Represses expression of target genes via its interaction with hda-1 histone deacetylase. Required for specification of the M lineage-derived coelomocyte and sex myoblast fate. Regulates coelomocyte fate by positively regulating proliferation and ceh-34 and possibly eya-1 expression in M.dlpa and M.drpa precursors. The sequence is that of Protein pop-1 from Caenorhabditis elegans.